The chain runs to 84 residues: Putative defensin-like protein 114 (84 aa).

A signal peptide spans 1–24 (MAITKKCFAAFVLILLFVMPFVYC). 4 cysteine pairs are disulfide-bonded: C41/C81, C47/C69, C54/C79, and C58/C80.

It belongs to the DEFL family.

It is found in the secreted. The sequence is that of Putative defensin-like protein 114 from Arabidopsis thaliana (Mouse-ear cress).